A 461-amino-acid polypeptide reads, in one-letter code: V-type ATP synthase beta chain (461 aa).

The protein belongs to the ATPase alpha/beta chains family.

Functionally, produces ATP from ADP in the presence of a proton gradient across the membrane. The V-type beta chain is a regulatory subunit. The protein is V-type ATP synthase beta chain of Clostridium botulinum (strain Kyoto / Type A2).